The following is a 147-amino-acid chain: S-protein homolog 10 (147 aa).

The first 20 residues, 1-20 (MNCFSYFFLVIILCAGLNNA), serve as a signal peptide directing secretion.

It belongs to the plant self-incompatibility (S1) protein family.

It localises to the secreted. This is S-protein homolog 10 from Arabidopsis thaliana (Mouse-ear cress).